Here is a 78-residue protein sequence, read N- to C-terminus: uncharacterized protein (78 aa).

This is an uncharacterized protein from Dictyostelium discoideum (Social amoeba).